A 433-amino-acid chain; its full sequence is Poly(A) ribonuclease POP2 (433 aa).

Met1 is subject to N-acetylmethionine. Residues 78–98 (LLTQQQQQQQQQQQPFNIGTP) are disordered. The span at 81 to 91 (QQQQQQQQQQQ) shows a compositional bias: low complexity. A Phosphothreonine; by YAK1 modification is found at Thr97. Positions 188, 190, 310, and 394 each coordinate a divalent metal cation.

It belongs to the CAF1 family. As to quaternary structure, subunit of the 1.0 MDa CCR4-NOT core complex that contains CCR4, CAF1, NOT1, NOT2, NOT3, NOT4, NOT5, CAF40 and CAF130. In the complex interacts with NOT1. The core complex probably is part of a less characterized 1.9 MDa CCR4-NOT complex. Mg(2+) is required as a cofactor.

It localises to the cytoplasm. The protein localises to the nucleus. The enzyme catalyses Exonucleolytic cleavage of poly(A) to 5'-AMP.. Its function is as follows. Acts as a probably catalytic component of the CCR4-NOT core complex, which in the nucleus seems to be a general transcription factor, and in the cytoplasm the major mRNA deadenylase involved in mRNA turnover. In vitro, POP2 has 3'-exoribonuclease activity with a preference for poly(A) RNAs, but also degrades poly(U) and poly(C) RNAs. Is part of a glucose-sensing system involved in growth control in response to glucose availability. The sequence is that of Poly(A) ribonuclease POP2 (POP2) from Saccharomyces cerevisiae (strain ATCC 204508 / S288c) (Baker's yeast).